The primary structure comprises 472 residues: WASH complex subunit 1 (472 aa).

Residues Met1–Arg51 form a required for WASH complex assembly region. Disordered regions lie at residues Glu289–Arg365, Gly377–Met412, and Ile426–Ser472. Composition is skewed to pro residues over residues Leu301–Pro319 and Ser327–Ala336. Residues Gln352 to Ser472 are VCA. In terms of domain architecture, WH2 spans Gly364–Val386. Positions Asn385–Gln401 are enriched in basic and acidic residues.

Belongs to the WASH1 family. In terms of assembly, component of the WASH complex.

The protein resides in the early endosome membrane. Its subcellular location is the recycling endosome membrane. In terms of biological role, acts as a nucleation-promoting factor at the surface of endosomes, where it recruits and activates the Arp2/3 complex to induce actin polymerization, playing a key role in the fission of tubules that serve as transport intermediates during endosome sorting. In Xenopus tropicalis (Western clawed frog), this protein is WASH complex subunit 1.